The chain runs to 704 residues: Plasma membrane ATPase 2 (704 aa).

Residues 1–16 (CSIAVGMIIEIIVMYP) form a helical membrane-spanning segment. Topologically, residues 17–26 (IQHRKYRPGI) are extracellular. Residues 27–48 (DNLLVLLIGGIPIAMPTVLSVT) traverse the membrane as a helical segment. Topologically, residues 49-395 (MAIGSHRLAQ…TSRAIFQRMK (347 aa)) are cytoplasmic. D81 functions as the 4-aspartylphosphate intermediate in the catalytic mechanism. Mg(2+) contacts are provided by D340 and D344. A helical membrane pass occupies residues 396 to 417 (NYTIYAVSITIRIVLGFMLLAL). The Extracellular portion of the chain corresponds to 418–422 (IWKFD). Residues 423–445 (FPPFMVLIIAILNDGTIMTISKD) traverse the membrane as a helical segment. Over 446–461 (RVKPSPLPDSWKLAEI) the chain is Cytoplasmic. Residues 462-482 (FTTGVVLGGYLAMMTVIFFWA) form a helical membrane-spanning segment. Residues 483-507 (AYETQFFPRVFGVSTLQRTATDDFR) lie on the Extracellular side of the membrane. Residues 508-528 (KLASAIYLQVSTISQALIFVT) traverse the membrane as a helical segment. Residues 529–540 (RSRSWSFVERPG) lie on the Cytoplasmic side of the membrane. The chain crosses the membrane as a helical span at residues 541-561 (LLLVVALIVAQLVATLIAVYA). Topologically, residues 562 to 570 (SWSFAAIEG) are extracellular. The helical transmembrane segment at 571-591 (IGWGWAGVIWLYNLVFYFPLD) threads the bilayer. Residues 592-704 (IIKFLIRYAL…IETIQQSYTV (113 aa)) are Cytoplasmic-facing.

Belongs to the cation transport ATPase (P-type) (TC 3.A.3) family. Type IIIA subfamily. In terms of assembly, possibly exists as a homodimer or a homotrimer.

It localises to the cell membrane. It carries out the reaction ATP + H2O + H(+)(in) = ADP + phosphate + 2 H(+)(out). The plasma membrane ATPase of plants and fungi is a hydrogen ion pump. The proton gradient it generates drives the active transport of nutrients by H(+)-symport. The resulting external acidification and/or internal alkinization may mediate growth responses. The protein is Plasma membrane ATPase 2 (LHA2) of Solanum lycopersicum (Tomato).